Reading from the N-terminus, the 348-residue chain is MDNVIGLEIIEVVEQAAIASARWMGKGEKDTADHVAVEAMRDRMNKIHMRGRIVIGEGERDDAPMLYIGEELGICTQPDAAQVCNPDELLEIDIAVDPCEGTNLVAYGQNGSMAVLAISEKGGLFAAPDFYMKKLAAPPAAKGKVDINKSATENLQILAQCLDRSIEELVVVVMKRERHNDLIKEIREAGARVALITDGDVSAALSCAFSGTNIHALMGIGAAPEGVISAAAMRALGGHFQGQLIYDPDIVKTGLIGESKESNLARLKEMGISDPDKVYTAEELACGETVLFAACGITPGTLMKGVRFFGGGARTQSLVISTQSKTARFVDTVHMFETPKRPKALQLH.

Mn(2+) contacts are provided by Asp-33, Glu-57, Asp-97, and Glu-100. Residues Glu-100 to Thr-102, Tyr-131, Arg-176 to Arg-178, and Asp-198 to Asp-200 contribute to the substrate site. Residue Glu-225 participates in Mn(2+) binding.

It belongs to the FBPase class 2 family. In terms of assembly, homotetramer.

It carries out the reaction beta-D-fructose 1,6-bisphosphate + H2O = beta-D-fructose 6-phosphate + phosphate. The enzyme catalyses D-sedoheptulose 1,7-bisphosphate + H2O = D-sedoheptulose 7-phosphate + phosphate. The protein operates within carbohydrate biosynthesis; Calvin cycle. In terms of biological role, catalyzes the hydrolysis of fructose 1,6-bisphosphate (Fru 1,6-P2) and sedoheptulose 1,7-bisphosphate (Sed 1,7-P2) to fructose 6-phosphate and sedoheptulose 7-phosphate, respectively. This is D-fructose 1,6-bisphosphatase class 2/sedoheptulose 1,7-bisphosphatase 2 from Acaryochloris marina (strain MBIC 11017).